Reading from the N-terminus, the 750-residue chain is MIIRSPEPEVKILVDRDHIKTSFEEWARPGHFSRTIAKGPETTTWIWNLHADAHDFDSHTSDLEEISRKVFSAHFGQLSIIFLWLSGMYFHGARFSNYEAWLSDPTHIGPSAQVVWPIVGQEILNGDVGGGFRGIQITSGFFQLWRASGITSELQLYCTAIGALIFAALMLFAGWFHYHKAAPKLAWFQDVESMLNHHLAGLLGLGSLSWAGHQVHVSLPINQFLNAGVDPKEIPLPHEFILNRDLLAQLYPSFAEGATPFFTLNWSKYADFLTFRGGLDPVTGGLWLTDTAHHHLAIAILFLIAGHMYRTNWGIGHGLKDILEAHKGPFTGQGHKGLYEILTTSWHAQLSLNLAMLGSLTIVVAHHMYAMPPYPYLATDYGTQLSLFTHHMWIGGFLIVGAAAHAAIFMVRDYDPTTRYNDLLDRVLRHRDAIISHLNWACIFLGFHSFGLYIHNDTMSALGRPQDMFSDTAIQLQPVFAQWIQNTHALAPGATAPGATASTSLTWGGGDLVAVGGKVALLPIPLGTADFLVHHIHAFTIHVTVLILLKGVLFARSSRLIPDKANLGFRFPCDGPGRGGTCQVSAWDHVFLGLFWMYNSISVVIFHFSWKMQSDVWGSISDQGVVTHITGGNFAQSSITINGWLRDFLWAQASQVIQSYGSSLSAYGLFFLGAHFVWAFSLMFLFSGRGYWQELIESIVWAHNKLKVAPATQPRALSIVQGRAVGVTHYLLGGIATTWAFFLARIIAVG.

8 consecutive transmembrane segments (helical) span residues 70–93 (VFSA…FHGA), 156–179 (LYCT…FHYH), 195–219 (LNHH…HVSL), 291–309 (TAHH…GHMY), 346–369 (WHAQ…HHMY), 385–411 (LSLF…IFMV), 433–455 (AIIS…LYIH), and 531–549 (FLVH…LILL). Positions 573 and 582 each coordinate [4Fe-4S] cluster. 2 consecutive transmembrane segments (helical) span residues 589 to 610 (HVFL…HFSW) and 664 to 686 (LSAY…MFLF). Histidine 675 serves as a coordination point for chlorophyll a'. Positions 683 and 691 each coordinate chlorophyll a. Tryptophan 692 contributes to the phylloquinone binding site. A helical transmembrane segment spans residues 724-744 (AVGVTHYLLGGIATTWAFFLA).

It belongs to the PsaA/PsaB family. As to quaternary structure, the PsaA/B heterodimer binds the P700 chlorophyll special pair and subsequent electron acceptors. PSI consists of a core antenna complex that captures photons, and an electron transfer chain that converts photonic excitation into a charge separation. The eukaryotic PSI reaction center is composed of at least 11 subunits. P700 is a chlorophyll a/chlorophyll a' dimer, A0 is one or more chlorophyll a, A1 is one or both phylloquinones and FX is a shared 4Fe-4S iron-sulfur center. serves as cofactor.

The protein localises to the plastid. The protein resides in the chloroplast thylakoid membrane. It carries out the reaction reduced [plastocyanin] + hnu + oxidized [2Fe-2S]-[ferredoxin] = oxidized [plastocyanin] + reduced [2Fe-2S]-[ferredoxin]. Functionally, psaA and PsaB bind P700, the primary electron donor of photosystem I (PSI), as well as the electron acceptors A0, A1 and FX. PSI is a plastocyanin-ferredoxin oxidoreductase, converting photonic excitation into a charge separation, which transfers an electron from the donor P700 chlorophyll pair to the spectroscopically characterized acceptors A0, A1, FX, FA and FB in turn. Oxidized P700 is reduced on the lumenal side of the thylakoid membrane by plastocyanin. This chain is Photosystem I P700 chlorophyll a apoprotein A1, found in Helianthus annuus (Common sunflower).